The primary structure comprises 220 residues: HTH-type transcriptional repressor GlaR (220 aa).

Residues 1-69 form the HTH gntR-type domain; that stretch reads MTITSLDGYR…NQKGYRVASM (69 aa). The H-T-H motif DNA-binding region spans 29–48; sequence MSLLTSRYALGVGPLREALS.

It is found in the cytoplasm. Its activity is regulated as follows. The repressive effect at the glaH promoter site is specifically relieved upon glutarate binding. In terms of biological role, negatively regulates the expression of the glaH-lhgD-gabDTP operon in a temporal manner during entry into stationary phase or during the first few hours of carbon starvation. Thereby is involved in the regulation of a L-lysine degradation pathway that proceeds via cadaverine, glutarate and L-2-hydroxyglutarate. Binds to two primary and two secondary sites in the promoter region of the glaH operon with the consensus sequences TTGTN5TTTT and ATGTN5TTTT of the primary sites, each separated by six nucleotides. This chain is HTH-type transcriptional repressor GlaR, found in Escherichia coli (strain K12).